The primary structure comprises 542 residues: Chaperonin GroEL 1 (542 aa).

ATP-binding positions include 29 to 32, 86 to 90, glycine 413, 477 to 479, and aspartate 493; these read TLGP, DGTTT, and NAA.

Belongs to the chaperonin (HSP60) family. Forms a cylinder of 14 subunits composed of two heptameric rings stacked back-to-back. Interacts with the co-chaperonin GroES.

The protein resides in the cytoplasm. The enzyme catalyses ATP + H2O + a folded polypeptide = ADP + phosphate + an unfolded polypeptide.. Functionally, together with its co-chaperonin GroES, plays an essential role in assisting protein folding. The GroEL-GroES system forms a nano-cage that allows encapsulation of the non-native substrate proteins and provides a physical environment optimized to promote and accelerate protein folding. The sequence is that of Chaperonin GroEL 1 from Renibacterium salmoninarum (strain ATCC 33209 / DSM 20767 / JCM 11484 / NBRC 15589 / NCIMB 2235).